Here is a 69-residue protein sequence, read N- to C-terminus: Cytochrome c oxidase subunit 8A, mitochondrial (69 aa).

The N-terminal 25 residues, methionine 1–arginine 25, are a transit peptide targeting the mitochondrion. Positions serine 2–leucine 19 match the SIFI-degron motif. Over valine 26–glycine 36 the chain is Mitochondrial matrix. The chain crosses the membrane as a helical span at residues threonine 37–serine 60. The Mitochondrial intermembrane segment spans residues histidine 61 to glutamate 69.

Belongs to the cytochrome c oxidase VIII family. As to quaternary structure, component of the cytochrome c oxidase (complex IV, CIV), a multisubunit enzyme composed of 14 subunits. The complex is composed of a catalytic core of 3 subunits MT-CO1, MT-CO2 and MT-CO3, encoded in the mitochondrial DNA, and 11 supernumerary subunits COX4I, COX5A, COX5B, COX6A, COX6B, COX6C, COX7A, COX7B, COX7C, COX8 and NDUFA4, which are encoded in the nuclear genome. The complex exists as a monomer or a dimer and forms supercomplexes (SCs) in the inner mitochondrial membrane with NADH-ubiquinone oxidoreductase (complex I, CI) and ubiquinol-cytochrome c oxidoreductase (cytochrome b-c1 complex, complex III, CIII), resulting in different assemblies (supercomplex SCI(1)III(2)IV(1) and megacomplex MCI(2)III(2)IV(2)). In response to mitochondrial stress, the precursor protein is ubiquitinated by the SIFI complex in the cytoplasm before mitochondrial import, leading to its degradation. Within the SIFI complex, UBR4 initiates ubiquitin chain that are further elongated or branched by KCMF1.

Its subcellular location is the mitochondrion inner membrane. Its pathway is energy metabolism; oxidative phosphorylation. Component of the cytochrome c oxidase, the last enzyme in the mitochondrial electron transport chain which drives oxidative phosphorylation. The respiratory chain contains 3 multisubunit complexes succinate dehydrogenase (complex II, CII), ubiquinol-cytochrome c oxidoreductase (cytochrome b-c1 complex, complex III, CIII) and cytochrome c oxidase (complex IV, CIV), that cooperate to transfer electrons derived from NADH and succinate to molecular oxygen, creating an electrochemical gradient over the inner membrane that drives transmembrane transport and the ATP synthase. Cytochrome c oxidase is the component of the respiratory chain that catalyzes the reduction of oxygen to water. Electrons originating from reduced cytochrome c in the intermembrane space (IMS) are transferred via the dinuclear copper A center (CU(A)) of subunit 2 and heme A of subunit 1 to the active site in subunit 1, a binuclear center (BNC) formed by heme A3 and copper B (CU(B)). The BNC reduces molecular oxygen to 2 water molecules using 4 electrons from cytochrome c in the IMS and 4 protons from the mitochondrial matrix. This Otolemur crassicaudatus (Brown greater galago) protein is Cytochrome c oxidase subunit 8A, mitochondrial (COX8A).